Consider the following 135-residue polypeptide: Large ribosomal subunit protein mL54 (135 aa).

This sequence belongs to the mitochondrion-specific ribosomal protein mL54 family. As to quaternary structure, component of the mitochondrial ribosome large subunit (39S) which comprises a 16S rRNA and about 50 distinct proteins.

Its subcellular location is the mitochondrion. The polypeptide is Large ribosomal subunit protein mL54 (mrpl54) (Danio rerio (Zebrafish)).